The primary structure comprises 327 residues: Dolichyl-phosphate beta-glucosyltransferase (327 aa).

Over 1–15 (MIDLFINIASFTIYG) the chain is Lumenal. A helical transmembrane segment spans residues 16-36 (IPVIPLFIIVFVILSYYLLLL). The Cytoplasmic segment spans residues 37–327 (HDESPLWLEK…YLLGIWKIKS (291 aa)).

This sequence belongs to the glycosyltransferase 2 family.

It is found in the endoplasmic reticulum membrane. The catalysed reaction is a di-trans,poly-cis-dolichyl phosphate + UDP-alpha-D-glucose = a di-trans,poly-cis-dolichyl beta-D-glucosyl phosphate + UDP. It participates in protein modification; protein glycosylation. Its function is as follows. Endoplasmic reticulum membrane-bound UDP-glucose:dolichyl-phosphate glucosyltransferase involved in protein N-linked glycosylation. In Dictyostelium discoideum (Social amoeba), this protein is Dolichyl-phosphate beta-glucosyltransferase (alg5).